A 158-amino-acid polypeptide reads, in one-letter code: Transcription elongation factor GreA (158 aa).

It belongs to the GreA/GreB family.

Necessary for efficient RNA polymerase transcription elongation past template-encoded arresting sites. The arresting sites in DNA have the property of trapping a certain fraction of elongating RNA polymerases that pass through, resulting in locked ternary complexes. Cleavage of the nascent transcript by cleavage factors such as GreA or GreB allows the resumption of elongation from the new 3'terminus. GreA releases sequences of 2 to 3 nucleotides. The polypeptide is Transcription elongation factor GreA (Methylobacterium sp. (strain 4-46)).